A 231-amino-acid polypeptide reads, in one-letter code: uncharacterized protein (231 aa).

Residues 43 to 76 form an SWIM-type zinc finger; it reads YKVKVDLDNNYFGLCTCQYKYNCKHAYALIEAYE.

This is an uncharacterized protein from Methanocaldococcus jannaschii (strain ATCC 43067 / DSM 2661 / JAL-1 / JCM 10045 / NBRC 100440) (Methanococcus jannaschii).